The following is a 316-amino-acid chain: Protein FLUORESCENT IN BLUE LIGHT, chloroplastic (316 aa).

The N-terminal 26 residues, M1–R26, are a transit peptide targeting the chloroplast. Residues M125–L145 form a helical membrane-spanning segment. Residues L144–S175 are a coiled coil. TPR repeat units lie at residues L203–L236, K243–E276, and T283–D316.

In terms of assembly, part of the FLU-containing chloroplast membrane complex composed of FLU, CRD1, PORB, PORC, CHLP and HEMA1. Interacts with HEMA1 (via C-terminus) only in the absence of light. No interaction with HEMA2.

It localises to the plastid. It is found in the chloroplast membrane. The protein resides in the chloroplast thylakoid membrane. Its function is as follows. Negative regulator of tetrapyrrole biosynthesis (including chlorophyll) in chloroplasts, probably via HEMA1 repression. Inhibits especially the magnesium ion Mg(2+) branch of tetrapyrrole biosynthesis, but independently of heme. The protein is Protein FLUORESCENT IN BLUE LIGHT, chloroplastic (FLU) of Arabidopsis thaliana (Mouse-ear cress).